The primary structure comprises 110 residues: Large ribosomal subunit protein uL22 (110 aa).

The protein belongs to the universal ribosomal protein uL22 family. In terms of assembly, part of the 50S ribosomal subunit.

This protein binds specifically to 23S rRNA; its binding is stimulated by other ribosomal proteins, e.g. L4, L17, and L20. It is important during the early stages of 50S assembly. It makes multiple contacts with different domains of the 23S rRNA in the assembled 50S subunit and ribosome. Functionally, the globular domain of the protein is located near the polypeptide exit tunnel on the outside of the subunit, while an extended beta-hairpin is found that lines the wall of the exit tunnel in the center of the 70S ribosome. This chain is Large ribosomal subunit protein uL22, found in Shewanella halifaxensis (strain HAW-EB4).